A 258-amino-acid chain; its full sequence is D-aminoacyl-tRNA deacylase (258 aa).

This sequence belongs to the DtdA deacylase family. In terms of assembly, monomer. Zn(2+) serves as cofactor.

The catalysed reaction is a D-aminoacyl-tRNA + H2O = a tRNA + a D-alpha-amino acid + H(+). It catalyses the reaction glycyl-tRNA(Ala) + H2O = tRNA(Ala) + glycine + H(+). D-aminoacyl-tRNA deacylase with broad substrate specificity. By recycling D-aminoacyl-tRNA to D-amino acids and free tRNA molecules, this enzyme counteracts the toxicity associated with the formation of D-aminoacyl-tRNA entities in vivo. In Cenarchaeum symbiosum (strain A), this protein is D-aminoacyl-tRNA deacylase.